Consider the following 87-residue polypeptide: uncharacterized protein (87 aa).

The N-terminal stretch at 1–25 (MKIRKILLSSALSFGMLISAVPALA) is a signal peptide.

This is an uncharacterized protein from Bacillus subtilis (strain 168).